We begin with the raw amino-acid sequence, 191 residues long: Large ribosomal subunit protein uL5 (191 aa).

It belongs to the universal ribosomal protein uL5 family. In terms of assembly, part of the 50S ribosomal subunit; part of the 5S rRNA/L5/L18/L25 subcomplex. Contacts the 5S rRNA and the P site tRNA. Forms a bridge to the 30S subunit in the 70S ribosome.

Functionally, this is one of the proteins that bind and probably mediate the attachment of the 5S RNA into the large ribosomal subunit, where it forms part of the central protuberance. In the 70S ribosome it contacts protein S13 of the 30S subunit (bridge B1b), connecting the 2 subunits; this bridge is implicated in subunit movement. Contacts the P site tRNA; the 5S rRNA and some of its associated proteins might help stabilize positioning of ribosome-bound tRNAs. The protein is Large ribosomal subunit protein uL5 of Salinibacter ruber (strain DSM 13855 / M31).